The following is a 198-amino-acid chain: Lipid A 4'-phosphatase (198 aa).

The chain crosses the membrane as a helical span at residues 143 to 165; it reads AGQHTILQVTIGSLIAWGFAYLF.

Belongs to the lipid A LpxF 4'-phosphatase family.

It localises to the cell inner membrane. Its pathway is bacterial outer membrane biogenesis; LPS lipid A biosynthesis. In terms of biological role, removes the 4'-phosphate group from tetra- and hexaacylated lipid A species, has no 1-phosphatase or Kdo hydrolase activity. Absence of the 4'-phosphate group renders the bacteria resistant to host-derived cationic antimicrobial peptides (CAMP), allowing it to camouflage itself from the host innate immune response, and plays a critical role in the long-term colonization of the host's stomach. The sequence is that of Lipid A 4'-phosphatase from Helicobacter pylori (strain J99 / ATCC 700824) (Campylobacter pylori J99).